A 203-amino-acid chain; its full sequence is Recombination protein RecR (203 aa).

The segment at 56 to 71 (CAVCGNVSDDERCRIC) adopts a C4-type zinc-finger fold. In terms of domain architecture, Toprim spans 79-179 (SVVCVVEEPK…TVTRIASGLP (101 aa)).

It belongs to the RecR family.

May play a role in DNA repair. It seems to be involved in an RecBC-independent recombinational process of DNA repair. It may act with RecF and RecO. In Mycobacterium avium (strain 104), this protein is Recombination protein RecR.